The chain runs to 226 residues: UPF0177 protein YbdJ (226 aa).

Transmembrane regions (helical) follow at residues L16 to F36, F43 to A63, L81 to L101, F169 to V189, and L206 to F226.

Belongs to the UPF0177 family.

The protein resides in the cell membrane. The polypeptide is UPF0177 protein YbdJ (ybdJ) (Lactococcus lactis subsp. lactis (strain IL1403) (Streptococcus lactis)).